The sequence spans 71 residues: Large ribosomal subunit protein bL31 (71 aa).

The protein belongs to the bacterial ribosomal protein bL31 family. Type A subfamily. As to quaternary structure, part of the 50S ribosomal subunit.

Functionally, binds the 23S rRNA. This is Large ribosomal subunit protein bL31 (rpmE) from Mycoplasmopsis synoviae (strain 53) (Mycoplasma synoviae).